A 68-amino-acid chain; its full sequence is Protein transport protein Sec61 subunit gamma (68 aa).

Residues 1–32 lie on the Cytoplasmic side of the membrane; sequence MDQVMQFVEPSRQFVKDSIRLVKRCTKPDRKE. Residues 33–61 form a helical membrane-spanning segment; that stretch reads FQKIAMATAIGFAIMGFIGFFVKLIHIPI. Topologically, residues 62 to 68 are extracellular; the sequence is NNIIVGS.

It belongs to the SecE/SEC61-gamma family. In terms of assembly, the SEC61 channel-forming translocon complex consists of channel-forming core components SEC61A1, SEC61B and SEC61G and different auxiliary components such as SEC62 and SEC63. The SEC61 channel associates with the multi-pass translocon (MPT) complex.

It localises to the endoplasmic reticulum membrane. In terms of biological role, component of SEC61 channel-forming translocon complex that mediates transport of signal peptide-containing precursor polypeptides across the endoplasmic reticulum (ER). Forms a ribosome receptor and a gated pore in the ER membrane, both functions required for cotranslational translocation of nascent polypeptides. The SEC61 channel is also involved in ER membrane insertion of transmembrane proteins: it mediates membrane insertion of the first few transmembrane segments of proteins, while insertion of subsequent transmembrane regions of multi-pass membrane proteins is mediated by the multi-pass translocon (MPT) complex. The chain is Protein transport protein Sec61 subunit gamma (sec61g) from Xenopus laevis (African clawed frog).